A 56-amino-acid polypeptide reads, in one-letter code: Mitoregulin (56 aa).

At 2-9 (ADVSERTL) the chain is on the mitochondrial matrix side. The helical transmembrane segment at 10-27 (QLSVLVAFASGVLLGWQA) threads the bilayer. Over 28 to 56 (NRLRRRYLDWRKRRLQDKLAATQKKLDLA) the chain is Mitochondrial intermembrane.

In terms of assembly, interacts with mitochondrial trifunctional enzyme, a heterotetrameric complex composed of 2 HADHA subunits and 2 HADHB subunits. Interacts with cytochrome b5 reductase CYB5R3; the interaction is required to maintain cellular lipid composition and leads to stimulation of mitochondrial respiratory complex I activity. Interacts with ATP synthase subunit ATP5F1B/ATP5B.

It localises to the mitochondrion inner membrane. Functionally, positively regulates mitochondrial complex assembly and/or stability. Increases mitochondrial membrane potential while decreasing mitochondrial reactive oxygen species. Increases mitochondrial respiration rate. Increased mitochondrial respiratory activity promotes myogenic differentiation which facilitates muscle growth and regeneration. Increases mitochondrial calcium retention capacity. Plays a role in maintenance of cellular lipid composition through its interaction with cytochrome b5 reductase CYB5R3 which is required for mitochondrial respiratory complex I activity. Interacts with the mitochondrial trifunctional enzyme complex (MTE) and enhances fatty acid beta-oxidation. Not required for MTE formation or stability. Modulates triglyceride clearance in adipocytes through its role in regulating fatty acid beta-oxidation and lipolysis. In Homo sapiens (Human), this protein is Mitoregulin.